Reading from the N-terminus, the 369-residue chain is Mannose-1-phosphate guanylyltransferase catalytic subunit beta (369 aa).

A substrate-binding domain region spans residues 12-231 (RALILVGGYG…TGFWMDIGQP (220 aa)). GDP-alpha-D-mannose is bound at residue Asp-120. Mg(2+) is bound at residue Asp-120. Lys-171 is an active-site residue. Residue Asp-227 coordinates GDP-alpha-D-mannose. Asp-227 serves as a coordination point for Mg(2+). A hexapeptide repeat domain region spans residues 254–369 (YTGPGVVGNV…ASVPEPQIIM (116 aa)).

The protein belongs to the transferase hexapeptide repeat family. As to quaternary structure, component of the GMPPA-GMPPB mannose-1-phosphate guanylyltransferase complex composed of 4 Gmppa subunits and 8 Gmppb subunits; the complex is organized into three layers, a central layer made up of 2 Gmppa dimers sandwiched between two layers each made up of 2 Gmppb dimers. Gmppb catalytic activity is reduced when part of the complex and binding of GDP-alpha-D-Mannose by Gmppa induces allosteric feedback inhibition of Gmppb. It depends on Mg(2+) as a cofactor.

The catalysed reaction is alpha-D-mannose 1-phosphate + GTP + H(+) = GDP-alpha-D-mannose + diphosphate. It functions in the pathway nucleotide-sugar biosynthesis; GDP-alpha-D-mannose biosynthesis; GDP-alpha-D-mannose from alpha-D-mannose 1-phosphate (GTP route): step 1/1. Enzyme activity is reduced by incorporation into the GMPPA-GMPPB mannose-1-phosphate guanylyltransferase complex. Allosterically inhibited, when part of the GMPPA-GMPPB complex, by GDP-alpha-D-mannose binding to Gmppa. Its function is as follows. Catalytic subunit of the GMPPA-GMPPB mannose-1-phosphate guanylyltransferase complex. Catalyzes the formation of GDP-mannose, an essential precursor of glycan moieties of glycoproteins and glycolipids. Can catalyze the reverse reaction in vitro. Together with GMPPA regulates GDP-alpha-D-mannose levels. The sequence is that of Mannose-1-phosphate guanylyltransferase catalytic subunit beta from Drosophila melanogaster (Fruit fly).